Here is a 323-residue protein sequence, read N- to C-terminus: Tetraacyldisaccharide 4'-kinase (323 aa).

Position 56 to 63 (56 to 63 (TVGGVGKT)) interacts with ATP.

This sequence belongs to the LpxK family.

It catalyses the reaction a lipid A disaccharide + ATP = a lipid IVA + ADP + H(+). The protein operates within glycolipid biosynthesis; lipid IV(A) biosynthesis; lipid IV(A) from (3R)-3-hydroxytetradecanoyl-[acyl-carrier-protein] and UDP-N-acetyl-alpha-D-glucosamine: step 6/6. In terms of biological role, transfers the gamma-phosphate of ATP to the 4'-position of a tetraacyldisaccharide 1-phosphate intermediate (termed DS-1-P) to form tetraacyldisaccharide 1,4'-bis-phosphate (lipid IVA). The polypeptide is Tetraacyldisaccharide 4'-kinase (Legionella pneumophila (strain Corby)).